The following is a 533-amino-acid chain: 2-succinyl-5-enolpyruvyl-6-hydroxy-3-cyclohexene-1-carboxylate synthase (533 aa).

This sequence belongs to the TPP enzyme family. MenD subfamily. Homodimer. Mg(2+) serves as cofactor. Mn(2+) is required as a cofactor. The cofactor is thiamine diphosphate.

It catalyses the reaction isochorismate + 2-oxoglutarate + H(+) = 5-enolpyruvoyl-6-hydroxy-2-succinyl-cyclohex-3-ene-1-carboxylate + CO2. The protein operates within quinol/quinone metabolism; 1,4-dihydroxy-2-naphthoate biosynthesis; 1,4-dihydroxy-2-naphthoate from chorismate: step 2/7. It functions in the pathway quinol/quinone metabolism; menaquinone biosynthesis. Catalyzes the thiamine diphosphate-dependent decarboxylation of 2-oxoglutarate and the subsequent addition of the resulting succinic semialdehyde-thiamine pyrophosphate anion to isochorismate to yield 2-succinyl-5-enolpyruvyl-6-hydroxy-3-cyclohexene-1-carboxylate (SEPHCHC). This Akkermansia muciniphila (strain ATCC BAA-835 / DSM 22959 / JCM 33894 / BCRC 81048 / CCUG 64013 / CIP 107961 / Muc) protein is 2-succinyl-5-enolpyruvyl-6-hydroxy-3-cyclohexene-1-carboxylate synthase.